Reading from the N-terminus, the 262-residue chain is Hemin import ATP-binding protein HmuV (262 aa).

In terms of domain architecture, ABC transporter spans 1-247 (MRNLTLQRGR…ERIKQIFAFD (247 aa)). Residue 31–38 (GPNGTGKS) participates in ATP binding.

This sequence belongs to the ABC transporter superfamily. Heme (hemin) importer (TC 3.A.1.14.5) family. As to quaternary structure, the complex is composed of two ATP-binding proteins (HmuV), two transmembrane proteins (HmuU) and a solute-binding protein (HmuT).

It is found in the cell inner membrane. Its function is as follows. Part of the ABC transporter complex HmuTUV involved in hemin import. Responsible for energy coupling to the transport system. The chain is Hemin import ATP-binding protein HmuV from Plesiomonas shigelloides (Aeromonas shigelloides).